Here is a 166-residue protein sequence, read N- to C-terminus: Endoribonuclease YbeY (166 aa).

Residues histidine 129, histidine 133, and histidine 139 each contribute to the Zn(2+) site.

Belongs to the endoribonuclease YbeY family. Requires Zn(2+) as cofactor.

It is found in the cytoplasm. Single strand-specific metallo-endoribonuclease involved in late-stage 70S ribosome quality control and in maturation of the 3' terminus of the 16S rRNA. In Mesorhizobium japonicum (strain LMG 29417 / CECT 9101 / MAFF 303099) (Mesorhizobium loti (strain MAFF 303099)), this protein is Endoribonuclease YbeY.